A 376-amino-acid polypeptide reads, in one-letter code: Enoyl-[acyl-carrier-protein] reductase, mitochondrial (376 aa).

A mitochondrion-targeting transit peptide spans 1-12; sequence MLRTLRTSQLAR. Catalysis depends on Y79, which acts as the Proton donor. NADP(+) is bound by residues N160, 183–186, 206–208, 277–280, 302–304, and K368; these read NSGV, RDR, YGGM, and YWL.

The protein belongs to the zinc-containing alcohol dehydrogenase family. Quinone oxidoreductase subfamily. In terms of assembly, homodimer.

The protein resides in the mitochondrion matrix. It carries out the reaction a 2,3-saturated acyl-[ACP] + NADP(+) = a (2E)-enoyl-[ACP] + NADPH + H(+). In terms of biological role, catalyzes the NADPH-dependent reduction of trans-2-enoyl thioesters in mitochondrial fatty acid synthesis (fatty acid synthesis type II). Fatty acid chain elongation in mitochondria uses acyl carrier protein (ACP) as an acyl group carrier, but the enzyme accepts both ACP and CoA thioesters as substrates in vitro. Required for respiration and the maintenance of the mitochondrial compartment. This chain is Enoyl-[acyl-carrier-protein] reductase, mitochondrial (ETR1), found in Yarrowia lipolytica (strain CLIB 122 / E 150) (Yeast).